Consider the following 426-residue polypeptide: Tyrosine-protein phosphatase non-receptor type 20 (426 aa).

Positions 1–10 (MSSPRKVRGK) are enriched in basic residues. Positions 1 to 58 (MSSPRKVRGKTGRDNDEEEGNSGNLNLRNSLPSSSQKMTPTKPIFGNKMNSENVKPSH) are disordered. A compositionally biased stretch (low complexity) spans 21–35 (NSGNLNLRNSLPSSS). Ser-76 is modified (phosphoserine). The span at 95–117 (NSMDSETAGPSKTVSPVLSGSSR) shows a compositional bias: polar residues. The interval 95–124 (NSMDSETAGPSKTVSPVLSGSSRLSKDTET) is disordered. At Ser-127 the chain carries Phosphoserine. The 254-residue stretch at 165 to 418 (IIREFLELEQ…QFCYEIVLEV (254 aa)) folds into the Tyrosine-protein phosphatase domain. Substrate contacts are provided by residues Asp-329, 359-365 (CSAGVGR), and Gln-403. Cys-359 functions as the Phosphocysteine intermediate in the catalytic mechanism.

The protein belongs to the protein-tyrosine phosphatase family. Non-receptor class subfamily. Testis-specific. Specifically expressed in testicular germ cells that undergo meiosis (at protein level).

It is found in the nucleus. It localises to the cytoplasm. The protein localises to the cytoskeleton. The protein resides in the microtubule organizing center. Its subcellular location is the centrosome. It carries out the reaction O-phospho-L-tyrosyl-[protein] + H2O = L-tyrosyl-[protein] + phosphate. Tyrosine-protein phosphatase targeted to sites of actin polymerization in response of varied extracellular stimuli. Has tyrosine phosphatase activity towards various tyrosyl phosphorylated substrates. The chain is Tyrosine-protein phosphatase non-receptor type 20 (Ptpn20) from Mus musculus (Mouse).